The following is a 100-amino-acid chain: Urease subunit gamma (100 aa).

It belongs to the urease gamma subunit family. As to quaternary structure, heterotrimer of UreA (gamma), UreB (beta) and UreC (alpha) subunits. Three heterotrimers associate to form the active enzyme.

Its subcellular location is the cytoplasm. It carries out the reaction urea + 2 H2O + H(+) = hydrogencarbonate + 2 NH4(+). It participates in nitrogen metabolism; urea degradation; CO(2) and NH(3) from urea (urease route): step 1/1. The polypeptide is Urease subunit gamma (Mesorhizobium japonicum (strain LMG 29417 / CECT 9101 / MAFF 303099) (Mesorhizobium loti (strain MAFF 303099))).